The following is a 303-amino-acid chain: Acetylglutamate kinase (303 aa).

Substrate contacts are provided by residues 76-77 (GG), R98, and N192.

It belongs to the acetylglutamate kinase family. ArgB subfamily.

Its subcellular location is the cytoplasm. The enzyme catalyses N-acetyl-L-glutamate + ATP = N-acetyl-L-glutamyl 5-phosphate + ADP. The protein operates within amino-acid biosynthesis; L-arginine biosynthesis; N(2)-acetyl-L-ornithine from L-glutamate: step 2/4. Its function is as follows. Catalyzes the ATP-dependent phosphorylation of N-acetyl-L-glutamate. The sequence is that of Acetylglutamate kinase from Chlorobium phaeobacteroides (strain DSM 266 / SMG 266 / 2430).